We begin with the raw amino-acid sequence, 160 residues long: Oocyte-secreted protein 4B (160 aa).

The signal sequence occupies residues 1–13 (MKTSVLLAITAMC).

Belongs to the PLAC1 family.

It localises to the secreted. This Homo sapiens (Human) protein is Oocyte-secreted protein 4B.